We begin with the raw amino-acid sequence, 216 residues long: DNA gyrase subunit B (216 aa).

The region spanning 140-216 (SELFLVEGDS…PDKLRYHKIV (77 aa)) is the Toprim domain.

Belongs to the type II topoisomerase GyrB family. Heterotetramer, composed of two GyrA and two GyrB chains. In the heterotetramer, GyrA contains the active site tyrosine that forms a transient covalent intermediate with DNA, while GyrB binds cofactors and catalyzes ATP hydrolysis.

Its subcellular location is the cytoplasm. The enzyme catalyses ATP-dependent breakage, passage and rejoining of double-stranded DNA.. In terms of biological role, a type II topoisomerase that negatively supercoils closed circular double-stranded (ds) DNA in an ATP-dependent manner to modulate DNA topology and maintain chromosomes in an underwound state. Negative supercoiling favors strand separation, and DNA replication, transcription, recombination and repair, all of which involve strand separation. Also able to catalyze the interconversion of other topological isomers of dsDNA rings, including catenanes and knotted rings. Type II topoisomerases break and join 2 DNA strands simultaneously in an ATP-dependent manner. The sequence is that of DNA gyrase subunit B (gyrB) from Acinetobacter sp. (strain SEIP 12.81).